The sequence spans 530 residues: MNNMSLKFPDIAINSSESSDDEDPSSKNEKKDGSIKVVKGLTDEKKVFEKAKNDFDEALAIIDDDDFEYTKSEDDKVRRKIDFFILPIMCITYGMQYLDKTAVSYAAVYGMKQEAHLSGYVYSWLSTIFYLGYMIAQYPAGYLLQKFPISYFMFIAAFLWSACVLLMAACSNRHGLLTLRFFSGVFEGCVNPAFVALTAMWYKREEQPVRVVSWYAFNGVAIMVGALLGYGTGHIKGSLQNWKYPFLVIGAISTAWSFVYLFFPQNPVLARFLNAREKRIAVERVRKNRTGMETKKFKPSQALEAFKDPQVILIVLYNGLCQVTNAMSVFSALIIQGIGYSGINATLLTLPSGAFAVAGMIASGIFTHYFKKGRIPLAMTTSSLTIVGSIMIWKIPHSNPWPRVVGVWLFCTISSGNAVILSLLSSNISGYSKKVTVNATMFLFYSIGNIVSPQLFKAGQTPEYIEGIQASLVSVCLFEGVLALLAFYYIFENARRDKLLENNPALGGEIKNEEFLDKTDREQIKFRYVW.

The interval 1 to 33 (MNNMSLKFPDIAINSSESSDDEDPSSKNEKKDG) is disordered. Over residues 24–33 (PSSKNEKKDG) the composition is skewed to basic and acidic residues. 12 helical membrane passes run 83–103 (FFILPIMCITYGMQYLDKTAV), 124–144 (WLSTIFYLGYMIAQYPAGYLL), 147–167 (FPISYFMFIAAFLWSACVLLM), 181–201 (FFSGVFEGCVNPAFVALTAMW), 211–231 (VVSWYAFNGVAIMVGALLGYG), 244–264 (YPFLVIGAISTAWSFVYLFFP), 323–343 (VTNAMSVFSALIIQGIGYSGI), 346–366 (TLLTLPSGAFAVAGMIASGIF), 375–395 (IPLAMTTSSLTIVGSIMIWKI), 404–424 (VVGVWLFCTISSGNAVILSLL), 436–456 (TVNATMFLFYSIGNIVSPQLF), and 471–491 (SLVSVCLFEGVLALLAFYYIF).

It belongs to the major facilitator superfamily. Allantoate permease family.

It localises to the endoplasmic reticulum. The protein localises to the membrane. This is an uncharacterized protein from Schizosaccharomyces pombe (strain 972 / ATCC 24843) (Fission yeast).